Here is a 434-residue protein sequence, read N- to C-terminus: Nicotinate phosphoribosyltransferase (434 aa).

A Phosphohistidine; by autocatalysis modification is found at H242.

Belongs to the NAPRTase family. In terms of processing, transiently phosphorylated on a His residue during the reaction cycle. Phosphorylation strongly increases the affinity for substrates and increases the rate of nicotinate D-ribonucleotide production. Dephosphorylation regenerates the low-affinity form of the enzyme, leading to product release.

It catalyses the reaction nicotinate + 5-phospho-alpha-D-ribose 1-diphosphate + ATP + H2O = nicotinate beta-D-ribonucleotide + ADP + phosphate + diphosphate. The protein operates within cofactor biosynthesis; NAD(+) biosynthesis; nicotinate D-ribonucleotide from nicotinate: step 1/1. Catalyzes the synthesis of beta-nicotinate D-ribonucleotide from nicotinate and 5-phospho-D-ribose 1-phosphate at the expense of ATP. In Agrobacterium fabrum (strain C58 / ATCC 33970) (Agrobacterium tumefaciens (strain C58)), this protein is Nicotinate phosphoribosyltransferase.